Consider the following 592-residue polypeptide: AT-rich interactive domain-containing protein 5A (592 aa).

The segment at 1 to 53 (MAPPVKGKRKQSEEGEPLDPPVSPQPDGEPRSRSPVRLEEPPEAGREREEEQE) is disordered. The interval 1-299 (MAPPVKGKRK…AAPPLESPQS (299 aa)) is interaction with SOX9. Ser-23 is modified (phosphoserine). Positions 28–49 (GEPRSRSPVRLEEPPEAGRERE) are enriched in basic and acidic residues. Residues 52 to 144 (QEEEQAFLVS…LVLPYVRHLK (93 aa)) enclose the ARID domain. Glycyl lysine isopeptide (Lys-Gly) (interchain with G-Cter in ubiquitin) cross-links involve residues Lys-82 and Lys-91. Residues 143–225 (LKGEDDKPLP…RGPAAGPSLP (83 aa)) form a disordered region. Basic and acidic residues predominate over residues 162–186 (MAKEPRGDDGATERPKKVKEEKRVD). The residue at position 253 (Ser-253) is a Phosphoserine. Residues 277–333 (CRHGAGGEPQAPPAAPPLESPQSPGGPAEDSRHRLTPLEGRQAPGGGLWGETQAGPR) are disordered. The segment covering 286-295 (QAPPAAPPLE) has biased composition (pro residues). Ser-438 and Ser-463 each carry phosphoserine.

In terms of assembly, interacts with SOX9. Interacts with ESR1. Interacts with RORC. In terms of processing, phosphorylated by MAPK14 on serine residues involving a TLR4 signaling pathway upon lipopolysaccharide (LPS) stimulation leading to its ubiquitination and proteasomal degradation. Ubiquitinated leading to proteasomal degradation; involving WWP1 linked to MAPK14-mediated phosphorylation upon LPS stimulation.

The protein resides in the nucleus. Functionally, DNA-binding protein that may regulate transcription and act as a repressor by binding to AT-rich stretches in the promoter region of target genes. May act as repressor and down-regulate enhancer-dependent gene expressison. May positively regulate chondrocyte-specific transcription such as of COL2A1 in collaboration with SOX9 and positively regulate histone H3 acetylation at chondrocyte-specific genes. May stimulate early-stage chondrocyte differentiation and inhibit later stage differention. Can repress ESR1-mediated transcriptional activation; proposed to act as corepressor for selective nuclear hormone receptors. As an RNA-binding protein, involved in the regulation of inflammatory response by stabilizing selective inflammation-related mRNAs, such as STAT3 and TBX21. Also stabilizes IL6 mRNA. Binds to stem loop structures located in the 3'UTRs of IL6, STAT3 and TBX21 mRNAs; at least for STAT3 prevents binding of ZC3H12A to the mRNA stem loop structure thus inhibiting its degradation activity. Contributes to elevated IL6 levels possibly implicated in autoimmunity processes. IL6-dependent stabilization of STAT3 mRNA may promote differentiation of naive CD4+ T-cells into T-helper Th17 cells. In CD4+ T-cells may also inhibit RORC-induced Th17 cell differentiation independently of IL6 signaling. Stabilization of TBX21 mRNA contributes to elevated interferon-gamma secretion in Th1 cells possibly implicated in the establishment of septic shock. Stabilizes TNFRSF4/OX40 mRNA by binding to the conserved stem loop structure in its 3'UTR; thereby competing with the mRNA-destabilizing functions of RC3H1 and endoribonuclease ZC3H12A. This Bos taurus (Bovine) protein is AT-rich interactive domain-containing protein 5A (ARID5A).